A 1601-amino-acid chain; its full sequence is Ectopic P granules protein 5 (1601 aa).

The segment at methionine 1–leucine 109 is disordered. A compositionally biased stretch (basic and acidic residues) spans arginine 15–aspartate 26.

It belongs to the EPG5 family.

It localises to the cytoplasm. Its function is as follows. Involved in autophagy. Has a role in the degradation of protein aggregates within autophagosomes. Essential for starvation-induced autotrophy and omegasome development. The sequence is that of Ectopic P granules protein 5 (epg-5) from Caenorhabditis briggsae.